The primary structure comprises 658 residues: Protein cueball (658 aa).

At 1 to 543 (MSGVTARMEN…SYCKNSFNRT (543 aa)) the chain is on the extracellular side. N-linked (GlcNAc...) asparagine glycosylation is found at Asn-25 and Asn-122. LDL-receptor class B repeat units lie at residues 100–142 (RKLY…NHDL), 152–195 (RHLY…DHYS), and 196–241 (NRIY…NSRY). 3 consecutive EGF-like domains span residues 352 to 384 (EIPICNNYCVHGKCVIGRDNRPTCECDAKFEGE), 387 to 422 (DRSKCDGFCLNSGNCSFSDATATCACPKNFSGKRCE), and 458 to 495 (EEYTCNNYCLNDGKCVLNNETMLVECRCGAEYTGKRCE). Cystine bridges form between Cys-356–Cys-365, Cys-360–Cys-375, Cys-391–Cys-401, Cys-395–Cys-410, Cys-412–Cys-421, Cys-462–Cys-472, Cys-466–Cys-483, and Cys-485–Cys-494. N-linked (GlcNAc...) asparagine glycans are attached at residues Asn-400 and Asn-415. An N-linked (GlcNAc...) asparagine glycan is attached at Asn-476. The N-linked (GlcNAc...) asparagine glycan is linked to Asn-541. The helical transmembrane segment at 544 to 564 (VVYASLAFAASLFILMVILLI) threads the bilayer. Residues 565-658 (VRRFYEEGRP…SCAGGDKNLP (94 aa)) are Cytoplasmic-facing.

This sequence belongs to the cueball family.

It is found in the cell membrane. Functionally, has a role in spermatogenesis and oogenesis. This chain is Protein cueball, found in Culex quinquefasciatus (Southern house mosquito).